The chain runs to 199 residues: Large ribosomal subunit protein mL51 (199 aa).

A mitochondrion-targeting transit peptide spans 1 to 15 (MNSASISRLTSVIRT).

It belongs to the mitochondrion-specific ribosomal protein mL51 family. In terms of assembly, component of the mitochondrial ribosome large subunit (39S) which comprises a 16S rRNA and about 50 distinct proteins.

The protein resides in the mitochondrion. The chain is Large ribosomal subunit protein mL51 (mrpl-51) from Caenorhabditis briggsae.